The chain runs to 239 residues: Ribosomal RNA large subunit methyltransferase E (239 aa).

The tract at residues 1-20 (MTKAPIAGNRTGRKLGQRVK) is disordered. Over residues 11–20 (TGRKLGQRVK) the composition is skewed to basic residues. S-adenosyl-L-methionine is bound by residues G81, W83, D104, D120, and D144. The Proton acceptor role is filled by K184.

It belongs to the class I-like SAM-binding methyltransferase superfamily. RNA methyltransferase RlmE family.

Its subcellular location is the cytoplasm. It catalyses the reaction uridine(2552) in 23S rRNA + S-adenosyl-L-methionine = 2'-O-methyluridine(2552) in 23S rRNA + S-adenosyl-L-homocysteine + H(+). Functionally, specifically methylates the uridine in position 2552 of 23S rRNA at the 2'-O position of the ribose in the fully assembled 50S ribosomal subunit. The sequence is that of Ribosomal RNA large subunit methyltransferase E from Rhizobium johnstonii (strain DSM 114642 / LMG 32736 / 3841) (Rhizobium leguminosarum bv. viciae).